Consider the following 415-residue polypeptide: Branched-chain-amino-acid aminotransferase, cytosolic (415 aa).

An N6-(pyridoxal phosphate)lysine modification is found at lysine 244.

This sequence belongs to the class-IV pyridoxal-phosphate-dependent aminotransferase family. Requires pyridoxal 5'-phosphate as cofactor.

It is found in the cytoplasm. The catalysed reaction is L-leucine + 2-oxoglutarate = 4-methyl-2-oxopentanoate + L-glutamate. It catalyses the reaction L-isoleucine + 2-oxoglutarate = (S)-3-methyl-2-oxopentanoate + L-glutamate. It carries out the reaction L-valine + 2-oxoglutarate = 3-methyl-2-oxobutanoate + L-glutamate. Its function is as follows. Catalyzes the first reaction in the catabolism of the essential branched chain amino acids leucine, isoleucine, and valine. This Caenorhabditis elegans protein is Branched-chain-amino-acid aminotransferase, cytosolic (bcat-1).